The following is a 392-amino-acid chain: Chorismate synthase (392 aa).

NADP(+) contacts are provided by Arg39 and Arg45. FMN contacts are provided by residues 131-133, 255-256, Gly300, 315-319, and Arg341; these read RSS, NA, and KPIPT.

Belongs to the chorismate synthase family. As to quaternary structure, homotetramer. FMNH2 is required as a cofactor.

The catalysed reaction is 5-O-(1-carboxyvinyl)-3-phosphoshikimate = chorismate + phosphate. The protein operates within metabolic intermediate biosynthesis; chorismate biosynthesis; chorismate from D-erythrose 4-phosphate and phosphoenolpyruvate: step 7/7. Its function is as follows. Catalyzes the anti-1,4-elimination of the C-3 phosphate and the C-6 proR hydrogen from 5-enolpyruvylshikimate-3-phosphate (EPSP) to yield chorismate, which is the branch point compound that serves as the starting substrate for the three terminal pathways of aromatic amino acid biosynthesis. This reaction introduces a second double bond into the aromatic ring system. The sequence is that of Chorismate synthase from Leuconostoc mesenteroides subsp. mesenteroides (strain ATCC 8293 / DSM 20343 / BCRC 11652 / CCM 1803 / JCM 6124 / NCDO 523 / NBRC 100496 / NCIMB 8023 / NCTC 12954 / NRRL B-1118 / 37Y).